The primary structure comprises 139 residues: 6,7-dimethyl-8-ribityllumazine synthase (139 aa).

Residues phenylalanine 11, 42–44 (ALE), and 66–68 (VVI) contribute to the 5-amino-6-(D-ribitylamino)uracil site. 71–72 (ET) is a binding site for (2S)-2-hydroxy-3-oxobutyl phosphate. The active-site Proton donor is histidine 74. Asparagine 98 lines the 5-amino-6-(D-ribitylamino)uracil pocket. Residue arginine 112 participates in (2S)-2-hydroxy-3-oxobutyl phosphate binding.

This sequence belongs to the DMRL synthase family.

The catalysed reaction is (2S)-2-hydroxy-3-oxobutyl phosphate + 5-amino-6-(D-ribitylamino)uracil = 6,7-dimethyl-8-(1-D-ribityl)lumazine + phosphate + 2 H2O + H(+). It functions in the pathway cofactor biosynthesis; riboflavin biosynthesis; riboflavin from 2-hydroxy-3-oxobutyl phosphate and 5-amino-6-(D-ribitylamino)uracil: step 1/2. Catalyzes the formation of 6,7-dimethyl-8-ribityllumazine by condensation of 5-amino-6-(D-ribitylamino)uracil with 3,4-dihydroxy-2-butanone 4-phosphate. This is the penultimate step in the biosynthesis of riboflavin. The sequence is that of 6,7-dimethyl-8-ribityllumazine synthase from Zymomonas mobilis subsp. mobilis (strain ATCC 31821 / ZM4 / CP4).